The following is a 358-amino-acid chain: Probable tartrate dehydrogenase/decarboxylase TtuC' (358 aa).

Mn(2+)-binding residues include D222, D246, and D250.

It belongs to the isocitrate and isopropylmalate dehydrogenases family. The cofactor is Mg(2+). Mn(2+) serves as cofactor. K(+) is required as a cofactor.

The protein localises to the cytoplasm. The catalysed reaction is tartrate + NAD(+) = 2-hydroxy-3-oxosuccinate + NADH + H(+). It catalyses the reaction (2R,3S)-tartrate + NAD(+) = 2-hydroxy-3-oxosuccinate + NADH + H(+). The enzyme catalyses (2R,3R)-tartrate + NAD(+) = 2-hydroxy-3-oxosuccinate + NADH + H(+). It carries out the reaction (2R,3R)-tartrate + H(+) = (R)-glycerate + CO2. The catalysed reaction is (R)-malate + NAD(+) = pyruvate + CO2 + NADH. It functions in the pathway carbohydrate acid metabolism; tartrate degradation; 2-hydroxy-3-oxosuccinate from L-tartrate: step 1/1. Its pathway is carbohydrate acid metabolism; tartrate degradation; 2-hydroxy-3-oxosuccinate from meso-tartrate: step 1/1. The protein operates within carbohydrate acid metabolism; tartrate degradation; D-glycerate from L-tartrate: step 1/1. Its function is as follows. Has multiple catalytic activities. Apart from catalyzing the oxidation of (+)-tartrate to oxaloglycolate, also converts meso-tartrate to D-glycerate and catalyzes the oxidative decarboxylation of D-malate to pyruvate. The polypeptide is Probable tartrate dehydrogenase/decarboxylase TtuC' (ttuC') (Agrobacterium vitis (Rhizobium vitis)).